The following is a 284-amino-acid chain: 1D-myo-inositol 2-acetamido-2-deoxy-alpha-D-glucopyranoside deacetylase (284 aa).

Zn(2+) is bound by residues histidine 12, aspartate 15, and histidine 146.

This sequence belongs to the MshB deacetylase family. Requires Zn(2+) as cofactor.

The catalysed reaction is 1D-myo-inositol 2-acetamido-2-deoxy-alpha-D-glucopyranoside + H2O = 1D-myo-inositol 2-amino-2-deoxy-alpha-D-glucopyranoside + acetate. Its function is as follows. Catalyzes the deacetylation of 1D-myo-inositol 2-acetamido-2-deoxy-alpha-D-glucopyranoside (GlcNAc-Ins) in the mycothiol biosynthesis pathway. In Mycolicibacterium vanbaalenii (strain DSM 7251 / JCM 13017 / BCRC 16820 / KCTC 9966 / NRRL B-24157 / PYR-1) (Mycobacterium vanbaalenii), this protein is 1D-myo-inositol 2-acetamido-2-deoxy-alpha-D-glucopyranoside deacetylase.